Reading from the N-terminus, the 221-residue chain is MGRFRGGLRCIKYLLLGFNLLFWLAGSAVIAFGLWFRFGGAIKELSSEDKSPEYFYVGLYVLVGAGALMMAVGFFGCCGAMRESQCVLGSFFTCLLVIFAAEVTTGVFAFIGKGVAIRHVQTMYEEAYNDYLKDRGKGNGTLITFHSTFQCCGKESSEQVQPTCPKELLGHKNCIDEIETIISVKLQLIGIVGIGIAGLTIFGMIFSMVLCCAIRNSRDVI.

Topologically, residues 1–13 are cytoplasmic; that stretch reads MGRFRGGLRCIKY. Residues 14–34 form a helical membrane-spanning segment; it reads LLLGFNLLFWLAGSAVIAFGL. The Extracellular portion of the chain corresponds to 35-54; it reads WFRFGGAIKELSSEDKSPEY. The helical transmembrane segment at 55–75 threads the bilayer; sequence FYVGLYVLVGAGALMMAVGFF. Over 76–90 the chain is Cytoplasmic; it reads GCCGAMRESQCVLGS. A helical transmembrane segment spans residues 91–111; it reads FFTCLLVIFAAEVTTGVFAFI. Residues 112–188 lie on the Extracellular side of the membrane; sequence GKGVAIRHVQ…ETIISVKLQL (77 aa). An N-linked (GlcNAc...) asparagine glycan is attached at Asn-139. The helical transmembrane segment at 189–209 threads the bilayer; that stretch reads IGIVGIGIAGLTIFGMIFSMV. Topologically, residues 210–221 are cytoplasmic; the sequence is LCCAIRNSRDVI.

It belongs to the tetraspanin (TM4SF) family.

It localises to the membrane. May play a role in signalling in oligodendrocytes in the early stages of their terminal differentiation into myelin-forming glia and may also function in stabilizing the mature sheath. The protein is Tetraspanin-2 (TSPAN2) of Homo sapiens (Human).